The following is a 174-amino-acid chain: ATP synthase subunit b, organellar chromatophore (174 aa).

A helical membrane pass occupies residues L26 to E46.

It belongs to the ATPase B chain family. In terms of assembly, F-type ATPases have 2 components, F(1) - the catalytic core - and F(0) - the membrane proton channel. F(1) has five subunits: alpha(3), beta(3), gamma(1), delta(1), epsilon(1). F(0) has four main subunits: a(1), b(1), b'(1) and c(10-14). The alpha and beta chains form an alternating ring which encloses part of the gamma chain. F(1) is attached to F(0) by a central stalk formed by the gamma and epsilon chains, while a peripheral stalk is formed by the delta, b and b' chains.

Its subcellular location is the plastid. It localises to the organellar chromatophore thylakoid membrane. Functionally, f(1)F(0) ATP synthase produces ATP from ADP in the presence of a proton or sodium gradient. F-type ATPases consist of two structural domains, F(1) containing the extramembraneous catalytic core and F(0) containing the membrane proton channel, linked together by a central stalk and a peripheral stalk. During catalysis, ATP synthesis in the catalytic domain of F(1) is coupled via a rotary mechanism of the central stalk subunits to proton translocation. Component of the F(0) channel, it forms part of the peripheral stalk, linking F(1) to F(0). The protein is ATP synthase subunit b, organellar chromatophore of Paulinella chromatophora.